Reading from the N-terminus, the 196-residue chain is uncharacterized protein (196 aa).

This is an uncharacterized protein from Caenorhabditis elegans.